We begin with the raw amino-acid sequence, 1000 residues long: UPF0182 protein SCO5204 (1000 aa).

7 helical membrane-spanning segments follow: residues 26-48 (LLLT…GFWT), 70-92 (IGLF…WLAH), 121-143 (WLLL…GQWR), 177-199 (FLLG…THYL), 220-237 (LSVL…AYWL), 267-289 (LPAK…ATLW), and 296-318 (PVIG…PALV). Disordered stretches follow at residues 884 to 908 (AETE…NPTV) and 943 to 1000 (EALQ…ADTG). Residues 888–897 (QPPDEGDDTT) show a composition bias toward acidic residues. Basic and acidic residues-rich tracts occupy residues 943-953 (EALQRAEDAQA) and 963-984 (NGDD…DKAG).

This sequence belongs to the UPF0182 family.

The protein resides in the cell membrane. This chain is UPF0182 protein SCO5204, found in Streptomyces coelicolor (strain ATCC BAA-471 / A3(2) / M145).